Consider the following 645-residue polypeptide: Transcription termination factor FttA (645 aa).

Positions 10 to 77 (APSNQNIMAT…IIVRIDESVR (68 aa)) are KHa. Residues 78–146 (KKEEDARKML…WTLRIRKATT (69 aa)) are KHb. Residues 187-391 (EISLTALGGF…LLIESTYGAK (205 aa)) form a metallo-beta-lactamase N-terminus region. The Zn(2+) site is built by His250, His252, Asp254, His255, His337, and Asp360. The tract at residues 392–586 (EDIQPTRQEV…CRMEKLDGFS (195 aa)) is beta-Casp. The segment at 587 to 645 (GHSDYNQLTGFVQKLRPKLRRVLVNHGERRKSENLALAVRRMFRIPAHYPQIQESIKLF) is metallo-beta-lactamase C-terminus. Residue His612 coordinates Zn(2+).

This sequence belongs to the metallo-beta-lactamase superfamily. RNA-metabolizing metallo-beta-lactamase-like family. FttA subfamily. As to quaternary structure, homodimer. Interacts with RNA polymerase (RNAP), interacts with the Spt4-Spt5 complex. Zn(2+) serves as cofactor.

Functionally, terminates transcription on the whole genome. Termination is linked to FttA-mediated RNA cleavage and does not require NTP hydrolysis. Cleaves endonucleolytically at the RNA exit channel of RNA polymerase (RNAP); the 5'-3' exonuclease activity of this protein degrades the nascent RNA released from RNAP. In terms of biological role, terminates transcription genome-wide in M.maripaludis. Restores wild-type growth to a strain of Methanococcus maripaludis depleted for this gene at 22 degrees Celsius and prevents transcriptional read-through. Transcription termination is most effective in vivo on RNAs with more than one U4-tract in their 3'-ends. Has endonuclease activity after U-rich tracts in transcription termination sequences. The protein is Transcription termination factor FttA of Cenarchaeum symbiosum (strain A).